The following is a 1776-amino-acid chain: Signal-induced proliferation-associated 1-like protein 3 (1776 aa).

2 disordered regions span residues 41 to 157 (AQNG…GRAF) and 240 to 325 (PGAL…EASR). Residues 54 to 69 (PAATTTRPSPTTPAMP) show a composition bias toward low complexity. 2 stretches are compositionally biased toward polar residues: residues 89 to 99 (EQSNPSPSQDT) and 112 to 129 (RNLQ…SSGS). The residue at position 94 (Ser-94) is a Phosphoserine. The span at 131 to 140 (AFHRLSRRRS) shows a compositional bias: basic residues. Ser-140 carries the phosphoserine modification. The segment covering 257–268 (GQPTKDSLQSLQ) has biased composition (polar residues). Position 394 is a phosphoserine (Ser-394). The disordered stretch occupies residues 438 to 461 (SRASVGSPGGSSEAHMAEPTLSTH). A Rap-GAP domain is found at 605–822 (LLKLDEQGLC…RTRQEYLKDL (218 aa)). Residues 960–1024 (DMTLRRNGLG…DQMIDLLRTS (65 aa)) form the PDZ domain. 3 disordered regions span residues 1040–1104 (PRRG…AQSL), 1117–1164 (RESQ…ATYA), and 1184–1632 (DPHF…LDPG). Polar residues-rich tracts occupy residues 1074–1104 (APWQ…AQSL) and 1151–1160 (PSGSFSTPGS). Over residues 1190–1201 (DGMSSGDSSSGG) the composition is skewed to low complexity. The span at 1239-1255 (SRQDAAGKDSPNRHSKG) shows a compositional bias: basic and acidic residues. Low complexity predominate over residues 1260–1275 (SSHSSSNTLSSNASSS). The span at 1298 to 1316 (GGSSDSGIDTTLYTSSPSC) shows a compositional bias: polar residues. Residues 1344 to 1357 (SAGRPHPVDRRREV) show a composition bias toward basic and acidic residues. Position 1358 is a phosphoserine (Ser-1358). Thr-1381 is modified (phosphothreonine). Over residues 1409–1436 (VYKTASAETPRPSQLSQCSPFQLSTSVP) the composition is skewed to polar residues. Position 1442 is an N6-acetyllysine (Lys-1442). Residues 1503 to 1512 (TIEDDLKKLI) are compositionally biased toward basic and acidic residues. 2 stretches are compositionally biased toward polar residues: residues 1526-1541 (GQSP…SDES) and 1566-1578 (LFTS…SSTL). Ser-1538 and Ser-1541 each carry phosphoserine. Over residues 1589–1601 (PPSGAPSTTPATG) the composition is skewed to low complexity. Phosphoserine is present on residues Ser-1614 and Ser-1617. The segment covering 1620 to 1630 (DGRDRPLRRLD) has biased composition (basic and acidic residues). Ser-1672 bears the Phosphoserine mark. Residues 1678 to 1705 (AHSPVHSHLSLERGPQTPRATPTMSEES) form a disordered region. Phosphothreonine occurs at positions 1694 and 1698. The stretch at 1715–1769 (QLEVMLKQLHTDLQKEKQDKVVLQSEVASLRQNNQRLQEESQAASEQLRKFAELF) forms a coiled coil.

Its subcellular location is the apical cell membrane. Functionally, plays a critical role in epithelial cell morphogenesis, polarity, adhesion and cytoskeletal organization in the lens. The chain is Signal-induced proliferation-associated 1-like protein 3 (Sipa1l3) from Mus musculus (Mouse).